The chain runs to 228 residues: Cytochrome c oxidase subunit 2 (228 aa).

Residues methionine 1–histidine 26 lie on the Mitochondrial intermembrane side of the membrane. Residues threonine 27–asparagine 48 traverse the membrane as a helical segment. Topologically, residues lysine 49–glutamate 62 are mitochondrial matrix. Residues leucine 63 to arginine 82 traverse the membrane as a helical segment. Residues leucine 83–tyrosine 228 are Mitochondrial intermembrane-facing. Cu cation-binding residues include histidine 161, cysteine 196, glutamate 198, cysteine 200, histidine 204, and methionine 207. Residue glutamate 198 coordinates Mg(2+).

It belongs to the cytochrome c oxidase subunit 2 family. As to quaternary structure, component of the cytochrome c oxidase (complex IV, CIV), a multisubunit enzyme composed of a catalytic core of 3 subunits and several supernumerary subunits. The complex exists as a monomer or a dimer and forms supercomplexes (SCs) in the inner mitochondrial membrane with ubiquinol-cytochrome c oxidoreductase (cytochrome b-c1 complex, complex III, CIII). Cu cation is required as a cofactor.

Its subcellular location is the mitochondrion inner membrane. The enzyme catalyses 4 Fe(II)-[cytochrome c] + O2 + 8 H(+)(in) = 4 Fe(III)-[cytochrome c] + 2 H2O + 4 H(+)(out). Component of the cytochrome c oxidase, the last enzyme in the mitochondrial electron transport chain which drives oxidative phosphorylation. The respiratory chain contains 3 multisubunit complexes succinate dehydrogenase (complex II, CII), ubiquinol-cytochrome c oxidoreductase (cytochrome b-c1 complex, complex III, CIII) and cytochrome c oxidase (complex IV, CIV), that cooperate to transfer electrons derived from NADH and succinate to molecular oxygen, creating an electrochemical gradient over the inner membrane that drives transmembrane transport and the ATP synthase. Cytochrome c oxidase is the component of the respiratory chain that catalyzes the reduction of oxygen to water. Electrons originating from reduced cytochrome c in the intermembrane space (IMS) are transferred via the dinuclear copper A center (CU(A)) of subunit 2 and heme A of subunit 1 to the active site in subunit 1, a binuclear center (BNC) formed by heme A3 and copper B (CU(B)). The BNC reduces molecular oxygen to 2 water molecules using 4 electrons from cytochrome c in the IMS and 4 protons from the mitochondrial matrix. In Galleria mellonella (Greater wax moth), this protein is Cytochrome c oxidase subunit 2 (COII).